Reading from the N-terminus, the 604-residue chain is Sulfite reductase [NADPH] flavoprotein alpha-component (604 aa).

One can recognise a Flavodoxin-like domain in the interval 68–206 (LSIIFASQTG…PAAEWRKQAL (139 aa)). FMN-binding positions include 74 to 79 (SQTGNA), 121 to 124 (STNG), and 157 to 166 (LGDSSYEFFC). Positions 239 to 453 (QNPYTATLLT…VEHNNNFKLP (215 aa)) constitute an FAD-binding FR-type domain. FAD is bound by residues threonine 327, glycine 361, 391 to 394 (RLYS), 409 to 411 (TVG), tyrosine 415, and 424 to 427 (GGAS). Residues 524–525 (SR), 530–534 (KVYVQ), and aspartate 566 each bind NADP(+). Tyrosine 604 lines the FAD pocket.

Belongs to the NADPH-dependent sulphite reductase flavoprotein subunit CysJ family. This sequence in the N-terminal section; belongs to the flavodoxin family. It in the C-terminal section; belongs to the flavoprotein pyridine nucleotide cytochrome reductase family. In terms of assembly, alpha(8)-beta(8). The alpha component is a flavoprotein, the beta component is a hemoprotein. It depends on FAD as a cofactor. FMN is required as a cofactor.

The enzyme catalyses hydrogen sulfide + 3 NADP(+) + 3 H2O = sulfite + 3 NADPH + 4 H(+). It participates in sulfur metabolism; hydrogen sulfide biosynthesis; hydrogen sulfide from sulfite (NADPH route): step 1/1. Functionally, component of the sulfite reductase complex that catalyzes the 6-electron reduction of sulfite to sulfide. This is one of several activities required for the biosynthesis of L-cysteine from sulfate. The flavoprotein component catalyzes the electron flow from NADPH -&gt; FAD -&gt; FMN to the hemoprotein component. The chain is Sulfite reductase [NADPH] flavoprotein alpha-component from Aliivibrio fischeri (strain ATCC 700601 / ES114) (Vibrio fischeri).